We begin with the raw amino-acid sequence, 150 residues long: Ribonuclease K6 (150 aa).

Positions 1–23 (MVLCFPLLLLLLVLWGPVCLLHA) are cleaved as a signal peptide. The active-site Proton acceptor is His38. Cystine bridges form between Cys46–Cys104, Cys60–Cys114, Cys78–Cys129, and Cys85–Cys92. N-linked (GlcNAc...) asparagine glycosylation is present at Asn55. Substrate contacts are provided by residues 61–65 (KHQNT) and Lys86. Asn100 carries an N-linked (GlcNAc...) asparagine glycan. Arg105 lines the substrate pocket. The Proton donor role is filled by His145.

The protein belongs to the pancreatic ribonuclease family. In terms of assembly, interacts (via N-terminus) with bacterial lipopolysaccharide (LPS).

The protein localises to the secreted. Its subcellular location is the lysosome. The protein resides in the cytoplasmic granule. Ribonuclease which shows a preference for the pyrimidines uridine and cytosine. Has potent antibacterial activity against a range of Gram-positive and Gram-negative bacteria, including P.aeruginosa, A.baumanii, M.luteus, S.aureus, E.faecalis, E.faecium, S.saprophyticus and E.coli. Causes loss of bacterial membrane integrity, and also promotes agglutination of Gram-negative bacteria. Probably contributes to urinary tract sterility. Bactericidal activity is independent of RNase activity. This Chlorocebus aethiops (Green monkey) protein is Ribonuclease K6 (RNASE6).